The following is a 610-amino-acid chain: Elongation factor 4 (610 aa).

The tr-type G domain maps to 11–193 (ENIRNFSIIA…QIVEKVPAPS (183 aa)). GTP contacts are provided by residues 23–28 (DHGKST) and 140–143 (NKID).

This sequence belongs to the TRAFAC class translation factor GTPase superfamily. Classic translation factor GTPase family. LepA subfamily.

Its subcellular location is the cell membrane. The catalysed reaction is GTP + H2O = GDP + phosphate + H(+). Functionally, required for accurate and efficient protein synthesis under certain stress conditions. May act as a fidelity factor of the translation reaction, by catalyzing a one-codon backward translocation of tRNAs on improperly translocated ribosomes. Back-translocation proceeds from a post-translocation (POST) complex to a pre-translocation (PRE) complex, thus giving elongation factor G a second chance to translocate the tRNAs correctly. Binds to ribosomes in a GTP-dependent manner. The protein is Elongation factor 4 of Streptococcus equi subsp. equi (strain 4047).